A 373-amino-acid polypeptide reads, in one-letter code: UDP-N-acetylenolpyruvoylglucosamine reductase (373 aa).

The region spanning 30-203 is the FAD-binding PCMH-type domain; the sequence is LACTANSVVT…SRVGFRLHTD (174 aa). The active site involves arginine 180. Residue serine 258 is the Proton donor of the active site. Residue glutamate 356 is part of the active site.

Belongs to the MurB family. The cofactor is FAD.

It is found in the cytoplasm. It catalyses the reaction UDP-N-acetyl-alpha-D-muramate + NADP(+) = UDP-N-acetyl-3-O-(1-carboxyvinyl)-alpha-D-glucosamine + NADPH + H(+). It participates in cell wall biogenesis; peptidoglycan biosynthesis. In terms of biological role, cell wall formation. The protein is UDP-N-acetylenolpyruvoylglucosamine reductase of Psychrobacter arcticus (strain DSM 17307 / VKM B-2377 / 273-4).